The following is a 118-amino-acid chain: RxLR effector protein PITG_19617 (118 aa).

A signal peptide spans 1–21 (MRAVYILAMACAATLQASSSA). The RxLR-dEER motif lies at 50–64 (RLLRVEDKEEETEEE).

The protein belongs to the RxLR effector family.

It localises to the secreted. Its subcellular location is the host nucleus. The protein resides in the host cytoplasm. Its function is as follows. Effector that enhances P.infestans colonization of Nicotiana benthamiana leaves. This is RxLR effector protein PITG_19617 from Phytophthora infestans (strain T30-4) (Potato late blight agent).